A 472-amino-acid chain; its full sequence is ATP synthase subunit beta (472 aa).

Gly156–Thr163 contacts ATP.

The protein belongs to the ATPase alpha/beta chains family. In terms of assembly, F-type ATPases have 2 components, CF(1) - the catalytic core - and CF(0) - the membrane proton channel. CF(1) has five subunits: alpha(3), beta(3), gamma(1), delta(1), epsilon(1). CF(0) has three main subunits: a(1), b(2) and c(9-12). The alpha and beta chains form an alternating ring which encloses part of the gamma chain. CF(1) is attached to CF(0) by a central stalk formed by the gamma and epsilon chains, while a peripheral stalk is formed by the delta and b chains.

The protein resides in the cell membrane. The catalysed reaction is ATP + H2O + 4 H(+)(in) = ADP + phosphate + 5 H(+)(out). In terms of biological role, produces ATP from ADP in the presence of a proton gradient across the membrane. The catalytic sites are hosted primarily by the beta subunits. The sequence is that of ATP synthase subunit beta from Symbiobacterium thermophilum (strain DSM 24528 / JCM 14929 / IAM 14863 / T).